Here is a 378-residue protein sequence, read N- to C-terminus: Monomethylxanthine methyltransferase 1 (378 aa).

S-adenosyl-L-homocysteine-binding residues include tyrosine 18, cysteine 61, asparagine 66, aspartate 100, leucine 101, serine 139, phenylalanine 140, and cysteine 156. Residues tyrosine 157, histidine 160, and tryptophan 161 each contribute to the theobromine site. Asparagine 178, aspartate 260, phenylalanine 262, and asparagine 263 together coordinate Mg(2+). Tyrosine 362 is a theobromine binding site.

Belongs to the methyltransferase superfamily. Type-7 methyltransferase family. Mg(2+) serves as cofactor. As to expression, expressed, at low levels, in stems, young leaves, floral buds and immature fruits (grains), but not in roots, old leaves and mature fruits.

Its subcellular location is the cytoplasm. It carries out the reaction 7-methylxanthine + S-adenosyl-L-methionine = theobromine + S-adenosyl-L-homocysteine + H(+). Its pathway is alkaloid biosynthesis. In terms of biological role, involved in the biosynthesis of caffeine. Catalyzes the conversion of 7-methylxanthine (7mX) to theobromine and of paraxanthine to caffeine. Has a 5-fold preference for 7mX. The polypeptide is Monomethylxanthine methyltransferase 1 (Coffea arabica (Arabian coffee)).